Reading from the N-terminus, the 279-residue chain is Prohibitin-4, mitochondrial (279 aa).

Glycine 2 is subject to N-acetylglycine. Residues 2-6 lie on the Mitochondrial matrix side of the membrane; that stretch reads GSQQV. A helical; Signal-anchor for type II membrane protein membrane pass occupies residues 7 to 28; that stretch reads AISFLTNLAKAAFGLGVAATAL. At 29–279 the chain is on the mitochondrial intermembrane side; sequence NSSLYTVDGG…SMLFNLNPGR (251 aa).

This sequence belongs to the prohibitin family. As to quaternary structure, component of a prohibitin multimeric complex in mitochondrial membranes. Mostly expressed in proliferative tissues, including vasculature, shoot and root apical tissues. Accumulates in dry seeds.

It localises to the mitochondrion inner membrane. Functionally, prohibitin probably acts as a holdase/unfoldase for the stabilization of newly synthesized mitochondrial proteins. This Arabidopsis thaliana (Mouse-ear cress) protein is Prohibitin-4, mitochondrial (PHB4).